A 65-amino-acid chain; its full sequence is Large ribosomal subunit protein bL35 (65 aa).

This sequence belongs to the bacterial ribosomal protein bL35 family.

The protein is Large ribosomal subunit protein bL35 of Syntrophobacter fumaroxidans (strain DSM 10017 / MPOB).